The following is a 182-amino-acid chain: Large ribosomal subunit protein uL5 (182 aa).

This sequence belongs to the universal ribosomal protein uL5 family. As to quaternary structure, part of the 50S ribosomal subunit; part of the 5S rRNA/L5/L18/L25 subcomplex. Contacts the 5S rRNA and the P site tRNA. Forms a bridge to the 30S subunit in the 70S ribosome.

Functionally, this is one of the proteins that bind and probably mediate the attachment of the 5S RNA into the large ribosomal subunit, where it forms part of the central protuberance. In the 70S ribosome it contacts protein S13 of the 30S subunit (bridge B1b), connecting the 2 subunits; this bridge is implicated in subunit movement. Contacts the P site tRNA; the 5S rRNA and some of its associated proteins might help stabilize positioning of ribosome-bound tRNAs. The chain is Large ribosomal subunit protein uL5 from Thermus aquaticus.